Reading from the N-terminus, the 291-residue chain is 2-C-methyl-D-erythritol 4-phosphate cytidylyltransferase (291 aa).

The disordered stretch occupies residues 1 to 23 (MTERDFDTPVETPTVQPAPAQGT).

This sequence belongs to the IspD/TarI cytidylyltransferase family. IspD subfamily.

The enzyme catalyses 2-C-methyl-D-erythritol 4-phosphate + CTP + H(+) = 4-CDP-2-C-methyl-D-erythritol + diphosphate. The protein operates within isoprenoid biosynthesis; isopentenyl diphosphate biosynthesis via DXP pathway; isopentenyl diphosphate from 1-deoxy-D-xylulose 5-phosphate: step 2/6. In terms of biological role, catalyzes the formation of 4-diphosphocytidyl-2-C-methyl-D-erythritol from CTP and 2-C-methyl-D-erythritol 4-phosphate (MEP). In Bifidobacterium longum subsp. infantis (strain ATCC 15697 / DSM 20088 / JCM 1222 / NCTC 11817 / S12), this protein is 2-C-methyl-D-erythritol 4-phosphate cytidylyltransferase.